A 446-amino-acid polypeptide reads, in one-letter code: High mobility group B protein 13 (446 aa).

Disordered stretches follow at residues Met1 to Phe43 and Leu110 to Lys130. The span at Ala11–Lys22 shows a compositional bias: basic residues. 2 consecutive DNA-binding regions (HMG box) follow at residues Thr129–Lys197 and Pro246–Lys312. Residues Asn349 to Lys371 show a composition bias toward basic and acidic residues. A disordered region spans residues Asn349 to Ser377. Residues Pro372–Asn440 constitute a DNA-binding region (HMG box 3).

It belongs to the HMGB family.

It is found in the nucleus. This is High mobility group B protein 13 (HMGB13) from Arabidopsis thaliana (Mouse-ear cress).